A 118-amino-acid polypeptide reads, in one-letter code: Small ribosomal subunit protein uS13 (118 aa).

The disordered stretch occupies residues 94-118 (GLPLRGQRTKTNARTRKGPRKPIKK).

Belongs to the universal ribosomal protein uS13 family. In terms of assembly, part of the 30S ribosomal subunit. Forms a loose heterodimer with protein S19. Forms two bridges to the 50S subunit in the 70S ribosome.

In terms of biological role, located at the top of the head of the 30S subunit, it contacts several helices of the 16S rRNA. In the 70S ribosome it contacts the 23S rRNA (bridge B1a) and protein L5 of the 50S subunit (bridge B1b), connecting the 2 subunits; these bridges are implicated in subunit movement. Contacts the tRNAs in the A and P-sites. The protein is Small ribosomal subunit protein uS13 of Cellvibrio japonicus (strain Ueda107) (Pseudomonas fluorescens subsp. cellulosa).